Here is a 594-residue protein sequence, read N- to C-terminus: Serine/threonine-protein kinase UL13 homolog (594 aa).

Disordered regions lie at residues 1–105 and 128–183; these read MARS…TSQC and ECDA…VGGR. Positions 38-47 are enriched in basic residues; the sequence is RPKKSTRGRS. Positions 223–594 constitute a Protein kinase domain; sequence GEIPKFGGAG…SIPLLWTPRP (372 aa). Residues 229–237 and lysine 248 each bind ATP; that span reads GGAGSYGEV. Aspartate 349 functions as the Proton acceptor in the catalytic mechanism.

Belongs to the protein kinase superfamily. Ser/Thr protein kinase family. In terms of processing, autophosphorylated.

The protein resides in the virion tegument. Its subcellular location is the host nucleus. The catalysed reaction is L-seryl-[protein] + ATP = O-phospho-L-seryl-[protein] + ADP + H(+). It carries out the reaction L-threonyl-[protein] + ATP = O-phospho-L-threonyl-[protein] + ADP + H(+). In terms of biological role, multifunctional serine/threonine kinase that plays a role in several processes including egress of virus particles from the nucleus, modulation of the actin cytoskeleton and regulation of viral and cellular gene expression. Regulates the nuclear localization of viral envelopment factors UL34 and UL31 homologs, by phosphorylating the US3 kinase homolog, indicating a role in nuclear egress. Disrupts host nuclear lamins, including LMNA and LMNB1. Phosphorylates the viral Fc receptor composed of glycoproteins E (gE) and I (gI). Phosphorylation of glycoprotein E (gE) by UL13 homolog alters its subcellular localization, from the host early endosome to the plasma membrane. Participates in the transcriptional regulation of cellular and viral mRNAs mainly by phosphorylating the viral transcriptional regulator ICP22 homolog. The polypeptide is Serine/threonine-protein kinase UL13 homolog (Equus caballus (Horse)).